The following is a 189-amino-acid chain: GTP cyclohydrolase 1 (189 aa).

Zn(2+) is bound by residues C78, H81, and C150.

It belongs to the GTP cyclohydrolase I family. In terms of assembly, toroid-shaped homodecamer, composed of two pentamers of five dimers.

The catalysed reaction is GTP + H2O = 7,8-dihydroneopterin 3'-triphosphate + formate + H(+). It participates in cofactor biosynthesis; 7,8-dihydroneopterin triphosphate biosynthesis; 7,8-dihydroneopterin triphosphate from GTP: step 1/1. The polypeptide is GTP cyclohydrolase 1 (Listeria welshimeri serovar 6b (strain ATCC 35897 / DSM 20650 / CCUG 15529 / CIP 8149 / NCTC 11857 / SLCC 5334 / V8)).